A 100-amino-acid polypeptide reads, in one-letter code: Enhancer of rudimentary homolog (100 aa).

The protein belongs to the E(R) family. Homodimer.

May have a role in the cell cycle. This chain is Enhancer of rudimentary homolog (erh), found in Dictyostelium discoideum (Social amoeba).